The chain runs to 132 residues: Small ribosomal subunit protein uS8 (132 aa).

This sequence belongs to the universal ribosomal protein uS8 family. Part of the 30S ribosomal subunit. Contacts proteins S5 and S12.

Functionally, one of the primary rRNA binding proteins, it binds directly to 16S rRNA central domain where it helps coordinate assembly of the platform of the 30S subunit. This is Small ribosomal subunit protein uS8 from Brucella anthropi (strain ATCC 49188 / DSM 6882 / CCUG 24695 / JCM 21032 / LMG 3331 / NBRC 15819 / NCTC 12168 / Alc 37) (Ochrobactrum anthropi).